Here is a 989-residue protein sequence, read N- to C-terminus: Bifunctional glutamine synthetase adenylyltransferase/adenylyl-removing enzyme (989 aa).

An adenylyl removase region spans residues 1-474 (MNSSAIDADI…HYGKLFEGDP (474 aa)). The adenylyl transferase stretch occupies residues 480–989 (LPIDYAGGPD…FNRLIGGDSA (510 aa)).

The protein belongs to the GlnE family. Mg(2+) is required as a cofactor.

The catalysed reaction is [glutamine synthetase]-O(4)-(5'-adenylyl)-L-tyrosine + phosphate = [glutamine synthetase]-L-tyrosine + ADP. The enzyme catalyses [glutamine synthetase]-L-tyrosine + ATP = [glutamine synthetase]-O(4)-(5'-adenylyl)-L-tyrosine + diphosphate. Its function is as follows. Involved in the regulation of glutamine synthetase GlnA, a key enzyme in the process to assimilate ammonia. When cellular nitrogen levels are high, the C-terminal adenylyl transferase (AT) inactivates GlnA by covalent transfer of an adenylyl group from ATP to specific tyrosine residue of GlnA, thus reducing its activity. Conversely, when nitrogen levels are low, the N-terminal adenylyl removase (AR) activates GlnA by removing the adenylyl group by phosphorolysis, increasing its activity. The regulatory region of GlnE binds the signal transduction protein PII (GlnB) which indicates the nitrogen status of the cell. This chain is Bifunctional glutamine synthetase adenylyltransferase/adenylyl-removing enzyme, found in Rhodopseudomonas palustris (strain BisB5).